A 354-amino-acid chain; its full sequence is MHPSPSSPTPQAADAVVIGAGPVGLFQVFQLGLQGIAAHLVDALPHVGGQCAELYPDKPIYDIPGIPVCTGLGLVELLQRQIAPFAPTLHLGQQIHALAAQADGRILLTTTAGTALLARSVFIAAGVGAFVPRAIKAEGVEALAPGQLLYHPDAATATRAATGKRVVVHGGDEAAVQAALDCVDAAAQVLLLHRRDAFQAAPAPLAQLQALREAGRIQVVIGQITGVETAPDGTLQALALLDPQGQPQRQPLDLLLAYLGISPRLGPIADWGLAMDRKQLAVDTATFATSVPGIYAVGDINTYPGKRKLILCGFHEATLAAFAEAERQAGHKLPLEYTTSSERLQARLGVAPAR.

FAD contacts are provided by Asp-42, Gln-50, Tyr-55, Ile-95, Phe-130, Asp-299, and Thr-339.

Belongs to the ferredoxin--NADP reductase type 2 family. As to quaternary structure, homodimer. Requires FAD as cofactor.

The enzyme catalyses 2 reduced [2Fe-2S]-[ferredoxin] + NADP(+) + H(+) = 2 oxidized [2Fe-2S]-[ferredoxin] + NADPH. The polypeptide is Ferredoxin--NADP reductase (Acidovorax sp. (strain JS42)).